Consider the following 47-residue polypeptide: Delta-actitoxin-Ael1a (47 aa).

3 disulfides stabilise this stretch: Cys4–Cys44, Cys6–Cys34, and Cys27–Cys45.

The protein belongs to the sea anemone sodium channel inhibitory toxin family. Type I subfamily. As to expression, expressed in ectodermal glands. Not expressed in nematocytes.

It is found in the secreted. Binds specifically to voltage-gated sodium channels (Nav), thereby delaying their inactivation during signal transduction. It strongly stimulates mammalian cardiac muscle contraction. Paralyzes the shore crab (C.maenas) by tetanic contractions after intramuscular injection. The sequence is that of Delta-actitoxin-Ael1a from Anthopleura elegantissima (Green aggregating anemone).